A 209-amino-acid chain; its full sequence is N-(5'-phosphoribosyl)anthranilate isomerase (209 aa).

The protein belongs to the TrpF family.

It catalyses the reaction N-(5-phospho-beta-D-ribosyl)anthranilate = 1-(2-carboxyphenylamino)-1-deoxy-D-ribulose 5-phosphate. It participates in amino-acid biosynthesis; L-tryptophan biosynthesis; L-tryptophan from chorismate: step 3/5. The polypeptide is N-(5'-phosphoribosyl)anthranilate isomerase (Pyrobaculum islandicum (strain DSM 4184 / JCM 9189 / GEO3)).